Here is a 228-residue protein sequence, read N- to C-terminus: Urease accessory protein UreF (228 aa).

It belongs to the UreF family. As to quaternary structure, ureD, UreF and UreG form a complex that acts as a GTP-hydrolysis-dependent molecular chaperone, activating the urease apoprotein by helping to assemble the nickel containing metallocenter of UreC. The UreE protein probably delivers the nickel.

It localises to the cytoplasm. Its function is as follows. Required for maturation of urease via the functional incorporation of the urease nickel metallocenter. This Prochlorococcus marinus (strain MIT 9215) protein is Urease accessory protein UreF.